A 280-amino-acid polypeptide reads, in one-letter code: DegV domain-containing protein CA_C1624 (280 aa).

Residues 4 to 279 (IALITDSTSD…PGLLGVVIFK (276 aa)) form the DegV domain. Hexadecanoate contacts are provided by Thr60 and Ser93.

In terms of biological role, may bind long-chain fatty acids, such as palmitate, and may play a role in lipid transport or fatty acid metabolism. This chain is DegV domain-containing protein CA_C1624, found in Clostridium acetobutylicum (strain ATCC 824 / DSM 792 / JCM 1419 / IAM 19013 / LMG 5710 / NBRC 13948 / NRRL B-527 / VKM B-1787 / 2291 / W).